The chain runs to 295 residues: Elongation factor Ts (295 aa).

An involved in Mg(2+) ion dislocation from EF-Tu region spans residues 79 to 82 (TDFV).

Belongs to the EF-Ts family.

It is found in the cytoplasm. In terms of biological role, associates with the EF-Tu.GDP complex and induces the exchange of GDP to GTP. It remains bound to the aminoacyl-tRNA.EF-Tu.GTP complex up to the GTP hydrolysis stage on the ribosome. The polypeptide is Elongation factor Ts (Bacillus mycoides (strain KBAB4) (Bacillus weihenstephanensis)).